Reading from the N-terminus, the 375-residue chain is Prophage integrase IntE (375 aa).

One can recognise a Core-binding (CB) domain in the interval 82–167; it reads ITTSTWLDRY…VLIDVFKEAQ (86 aa). A Tyr recombinase domain is found at 189–375; the sequence is ITRQRLSLEE…RGKGWSKVAL (187 aa). Catalysis depends on residues arginine 226, lysine 249, histidine 330, arginine 333, and histidine 353. Residues 350–375 form a disordered region; it reads LLGHKTQQQTDRYHDDRGKGWSKVAL. Tyrosine 362 (O-(3'-phospho-DNA)-tyrosine intermediate) is an active-site residue.

It belongs to the 'phage' integrase family.

Integrase from the cryptic lambdoid prophage e14. Integrase is necessary for integration of the phage into the host genome by site-specific recombination. In conjunction with excisionase, integrase is also necessary for excision of the prophage from the host genome. The polypeptide is Prophage integrase IntE (intE) (Escherichia coli (strain K12)).